We begin with the raw amino-acid sequence, 851 residues long: Protein BCK2 (851 aa).

The segment covering 1–10 (MPKNSHHHRS) has biased composition (basic residues). Disordered regions lie at residues 1 to 91 (MPKN…RKKS), 233 to 271 (EVVPKSTHDPSLAKPPSRFTESETNSTPNLSSIPLMNTK), 315 to 355 (SLSL…LPEE), 466 to 504 (FLDGQPQHKSGSVKGGHRKKQESISDAQRIQHSNSYITT), and 698 to 722 (HASRSESNNNTGNRVSYSGSTPNNV). Residues 11-23 (SSVNSTKSRSTES) show a composition bias toward low complexity. Polar residues predominate over residues 37–66 (ASGSTQASPDRNSSTGSCSTPVLPTMNVMS). A compositionally biased stretch (basic and acidic residues) spans 71-81 (VLLEDPRDNHT). Polar residues-rich tracts occupy residues 254-271 (SETNSTPNLSSIPLMNTK), 334-349 (SPRTSRSFNCGDSQSK), 489-504 (ISDAQRIQHSNSYITT), and 702-722 (SESNNNTGNRVSYSGSTPNNV). Phosphoserine is present on S334. Residues S757 and S761 each carry the phosphoserine modification.

Functionally, dosage dependent suppressor of PKC1 deletion and MPK1 deletion. Involved in cell lysis. This chain is Protein BCK2 (BCK2), found in Saccharomyces cerevisiae (strain ATCC 204508 / S288c) (Baker's yeast).